A 351-amino-acid chain; its full sequence is MIFLKILLLPFSLLYGGITAIRNYAYDKGWYKSYTLPVAVVCVGNIKAGGTGKTPFTQLLLQQFAGKYKTAVLSRGYGRKTKGFVLATAASTSAEIGDEPLQLYTHAQGVYAVAVCEDRVAGVEKLLQLIPDLKLVILDDGFQHRRINRDVNILLTEYQAPFYADWVLPAGRLREFRNGATRADAVVVTKTPAHAALLKTDNILRHTAKAIPVLYTTIEYGATRNEDGNYTWQPNEKAVLVTGIANPQPLVQYLNSRHIDIIKQFEFKDHYSYTLRDIQQMLDYQNANDGVKIVMTEKDWVKVVPLLRELNLSKGWYYVPIQIGIYSDQQQLLNTVETKIIDRLNRLTQHT.

47-54 (KAGGTGKT) is a binding site for ATP.

This sequence belongs to the LpxK family.

The enzyme catalyses a lipid A disaccharide + ATP = a lipid IVA + ADP + H(+). Its pathway is glycolipid biosynthesis; lipid IV(A) biosynthesis; lipid IV(A) from (3R)-3-hydroxytetradecanoyl-[acyl-carrier-protein] and UDP-N-acetyl-alpha-D-glucosamine: step 6/6. Its function is as follows. Transfers the gamma-phosphate of ATP to the 4'-position of a tetraacyldisaccharide 1-phosphate intermediate (termed DS-1-P) to form tetraacyldisaccharide 1,4'-bis-phosphate (lipid IVA). This is Tetraacyldisaccharide 4'-kinase from Cytophaga hutchinsonii (strain ATCC 33406 / DSM 1761 / CIP 103989 / NBRC 15051 / NCIMB 9469 / D465).